The primary structure comprises 246 residues: CD99 antigen-like protein 2 (246 aa).

A signal peptide spans Met1 to Gly25. Over Asp26–Gly160 the chain is Extracellular. The interval Lys43–Val156 is disordered. Low complexity-rich tracts occupy residues Thr49–Arg58 and Thr71–Thr81. The span at Asp100–Lys109 shows a compositional bias: basic and acidic residues. The O-linked (Xyl...) (chondroitin sulfate) serine glycan is linked to Ser153. Residues Thr161–Leu181 form a helical membrane-spanning segment. Residues Ser182–Ile246 lie on the Cytoplasmic side of the membrane. The segment at Ala223–Ile246 is disordered. The span at Thr227 to Thr236 shows a compositional bias: polar residues.

The protein belongs to the CD99 family. O-glycosylated. As to expression, expressed predominantly in the ventral medullary surface of the brain, moderate expression in the cerebral cortex and cerebellum. Low expression in lung and kidney. No expression in heart, stomach, intestine and skeletal muscle.

The protein localises to the cell membrane. The protein resides in the cell junction. It localises to the secreted. Its function is as follows. Plays a role in a late step of leukocyte extravasation helping cells to overcome the endothelial basement membrane. Acts at the same site as, but independently of, PECAM1. Homophilic adhesion molecule, but these interactions may not be required for cell aggregation. The polypeptide is CD99 antigen-like protein 2 (Cd99l2) (Rattus norvegicus (Rat)).